Consider the following 350-residue polypeptide: Anthranilate phosphoribosyltransferase (350 aa).

5-phospho-alpha-D-ribose 1-diphosphate is bound by residues glycine 94, 97-98 (GD), threonine 102, 104-107 (NIST), 122-130 (KHGNRAVSS), and serine 134. Residue glycine 94 participates in anthranilate binding. Residue serine 106 coordinates Mg(2+). Asparagine 125 contacts anthranilate. Arginine 180 serves as a coordination point for anthranilate. 2 residues coordinate Mg(2+): aspartate 239 and glutamate 240.

The protein belongs to the anthranilate phosphoribosyltransferase family. As to quaternary structure, homodimer. The cofactor is Mg(2+).

The enzyme catalyses N-(5-phospho-beta-D-ribosyl)anthranilate + diphosphate = 5-phospho-alpha-D-ribose 1-diphosphate + anthranilate. It functions in the pathway amino-acid biosynthesis; L-tryptophan biosynthesis; L-tryptophan from chorismate: step 2/5. Its function is as follows. Catalyzes the transfer of the phosphoribosyl group of 5-phosphorylribose-1-pyrophosphate (PRPP) to anthranilate to yield N-(5'-phosphoribosyl)-anthranilate (PRA). The sequence is that of Anthranilate phosphoribosyltransferase from Geobacter sulfurreducens (strain ATCC 51573 / DSM 12127 / PCA).